A 540-amino-acid polypeptide reads, in one-letter code: Calnexin homolog (540 aa).

An N-terminal signal peptide occupies residues 1 to 29 (MELSRRKMCCYIQFCCFVLIGCFISQICA). Residues 30 to 469 (SSDAIFYESF…EKAETQPNIT (440 aa)) lie on the Lumenal side of the membrane. Ca(2+) is bound by residues Ser38 and Asp69. Cys112 and Cys147 form a disulfide bridge. Tyr116, Lys118, Tyr138, and Asp145 together coordinate an alpha-D-glucoside. Residues 221 to 301 (LIPTKTIPDP…DWDDEEDGEW (81 aa)) form a disordered region. The p domain (Extended arm) stretch occupies residues 227–360 (IPDPDDKKPE…REIPNPDYFE (134 aa)). The segment covering 228–253 (PDPDDKKPEDWDERAKIPDPEATKPD) has biased composition (basic and acidic residues). Tandem repeats lie at residues 229-240 (DPDDKKPEDWDE), 246-257 (DPEATKPDDWDE), 265-276 (DEEAEKPEGWLD), 284-295 (DPEAVKPEDWDD), and 299-309 (GEWEAPQIENP). 2 4 X approximate repeats regions span residues 229–295 (DPDD…DWDD) and 299–356 (GEWE…IPNP). Composition is skewed to acidic residues over residues 254–285 (DWDE…IDDP) and 292–301 (DWDDEEDGEW). Cys311 and Cys317 are oxidised to a cystine. 3 repeat units span residues 318-328 (GEWRRPLKRNP), 332-342 (GKWHAPLIDNP), and 346-356 (GIWKPREIPNP). Residue Glu375 coordinates an alpha-D-glucoside. Asp386 lines the Ca(2+) pocket. Residue Asn467 is glycosylated (N-linked (GlcNAc...) asparagine). Residues 470–490 (IGVIVSIIVVIFSILLKLLFG) form a helical membrane-spanning segment. At 491-540 (GKKAAPKVNVVPKKKEEPEASNTAEVREGEEEKTEGEVAAAPRRRPRRDT) the chain is on the cytoplasmic side. Residues 499–540 (NVVPKKKEEPEASNTAEVREGEEEKTEGEVAAAPRRRPRRDT) form a disordered region.

This sequence belongs to the calreticulin family.

The protein localises to the endoplasmic reticulum membrane. Its function is as follows. Calcium-binding protein that interacts with newly synthesized monoglucosylated glycoproteins in the endoplasmic reticulum. It may act in assisting protein assembly and/or in the retention within the ER of unassembled protein subunits. It seems to play a major role in the quality control apparatus of the ER by the retention of incorrectly folded proteins. This chain is Calnexin homolog, found in Helianthus tuberosus (Jerusalem artichoke).